The sequence spans 455 residues: Protein U54 (455 aa).

Belongs to the herpesviridae UL82 family.

The sequence is that of Protein U54 (U54) from Homo sapiens (Human).